A 288-amino-acid chain; its full sequence is Eukaryotic translation initiation factor 3 subunit F-2 (288 aa).

Positions 12–149 (VLLHPLVLFQ…TRIFCAVATG (138 aa)) constitute an MPN domain.

This sequence belongs to the eIF-3 subunit F family. In terms of assembly, component of the eukaryotic translation initiation factor 3 (eIF-3) complex. The eIF-3 complex interacts with pix.

It localises to the cytoplasm. Its function is as follows. Component of the eukaryotic translation initiation factor 3 (eIF-3) complex, which is involved in protein synthesis of a specialized repertoire of mRNAs and, together with other initiation factors, stimulates binding of mRNA and methionyl-tRNAi to the 40S ribosome. The eIF-3 complex specifically targets and initiates translation of a subset of mRNAs involved in cell proliferation. In Drosophila pseudoobscura pseudoobscura (Fruit fly), this protein is Eukaryotic translation initiation factor 3 subunit F-2.